The following is a 770-amino-acid chain: Protein PAT1 homolog 1 (770 aa).

The segment at 1–26 (MFRYESLEDCPLDEDEDAFQGLGEED) is disordered. The tract at residues 1-84 (MFRYESLEDC…EMDLLGDHEE (84 aa)) is region A; interaction with DDX6/RCK. Residues 1–397 (MFRYESLEDC…HRSSHQDHLR (397 aa)) are involved in nuclear foci localization. The span at 7-26 (LEDCPLDEDEDAFQGLGEED) shows a compositional bias: acidic residues. The region N; interaction with decapping machinery stretch occupies residues 85–388 (NLAERLSKMV…LNGAGDRGSH (304 aa)). Residues 86–95 (LAERLSKMVI) carry the Nuclear export signal motif. Residue S177 is modified to Phosphoserine. T178 carries the phosphothreonine modification. A phosphoserine mark is found at S179 and S184. T194 is modified (phosphothreonine). Asymmetric dimethylarginine is present on residues R217, R223, and R263. Residues 223 to 397 (RYPAPYGERM…HRSSHQDHLR (175 aa)) are involved in RNA-binding. S278 bears the Phosphoserine mark. R284 bears the Asymmetric dimethylarginine mark. Disordered regions lie at residues 315-344 (FRAFFSAPPSATPPPQQHPPGPGPHLQNLR) and 360-400 (QHRR…RKDP). The span at 324–337 (SATPPPQQHPPGPG) shows a compositional bias: pro residues. Positions 367–380 (QRQQQNRNQHRNLN) are enriched in low complexity. At R385 the chain carries Omega-N-methylarginine. The segment covering 385 to 400 (RGSHRSSHQDHLRKDP) has biased composition (basic and acidic residues). Positions 389 to 448 (RSSHQDHLRKDPYANLMLQREKDWVSKIQMMQLQSTDPYLDDFYYQNYFEKLEKLSAAEE) are region H. The interval 398-770 (KDPYANLMLQ…TKLQLVQGIR (373 aa)) is involved in nuclear speckle localization. Positions 449-770 (IQGDGPKKER…TKLQLVQGIR (322 aa)) are region C.

Belongs to the PAT1 family. In terms of assembly, interacts (via region A) with DDX6/RCK. Interacts (via region H and region C) with LSM1 and LSM4. Interacts (via region N) with DCP1A, DCP2, EDC3, EDC4 and XRN1. Interacts with the CCR4-NOT complex. Interacts with the Lsm-containing SMN-Sm protein complex. Interacts with EIF4ENIF1/4E-T.

The protein localises to the cytoplasm. Its subcellular location is the P-body. It is found in the nucleus. The protein resides in the PML body. It localises to the nucleus speckle. Functionally, RNA-binding protein involved in deadenylation-dependent decapping of mRNAs, leading to the degradation of mRNAs. Acts as a scaffold protein that connects deadenylation and decapping machinery. Required for cytoplasmic mRNA processing body (P-body) assembly. This Pongo abelii (Sumatran orangutan) protein is Protein PAT1 homolog 1 (PATL1).